A 216-amino-acid chain; its full sequence is 3-isopropylmalate dehydratase small subunit (216 aa).

This sequence belongs to the LeuD family. LeuD type 1 subfamily. As to quaternary structure, heterodimer of LeuC and LeuD.

The catalysed reaction is (2R,3S)-3-isopropylmalate = (2S)-2-isopropylmalate. It functions in the pathway amino-acid biosynthesis; L-leucine biosynthesis; L-leucine from 3-methyl-2-oxobutanoate: step 2/4. Its function is as follows. Catalyzes the isomerization between 2-isopropylmalate and 3-isopropylmalate, via the formation of 2-isopropylmaleate. In Burkholderia thailandensis (strain ATCC 700388 / DSM 13276 / CCUG 48851 / CIP 106301 / E264), this protein is 3-isopropylmalate dehydratase small subunit.